The following is a 368-amino-acid chain: Alanine racemase 3 (368 aa).

K42 functions as the Proton acceptor; specific for D-alanine in the catalytic mechanism. At K42 the chain carries N6-(pyridoxal phosphate)lysine. R141 serves as a coordination point for substrate. The active-site Proton acceptor; specific for L-alanine is the Y262. M310 contacts substrate.

This sequence belongs to the alanine racemase family. It depends on pyridoxal 5'-phosphate as a cofactor.

It catalyses the reaction L-alanine = D-alanine. It functions in the pathway amino-acid biosynthesis; D-alanine biosynthesis; D-alanine from L-alanine: step 1/1. In terms of biological role, catalyzes the interconversion of L-alanine and D-alanine. May also act on other amino acids. This chain is Alanine racemase 3 (alr3), found in Salmonella typhi.